The sequence spans 169 residues: Peptide methionine sulfoxide reductase MsrA (169 aa).

Cys10 is a catalytic residue.

The protein belongs to the MsrA Met sulfoxide reductase family.

It carries out the reaction L-methionyl-[protein] + [thioredoxin]-disulfide + H2O = L-methionyl-(S)-S-oxide-[protein] + [thioredoxin]-dithiol. The enzyme catalyses [thioredoxin]-disulfide + L-methionine + H2O = L-methionine (S)-S-oxide + [thioredoxin]-dithiol. In terms of biological role, has an important function as a repair enzyme for proteins that have been inactivated by oxidation. Catalyzes the reversible oxidation-reduction of methionine sulfoxide in proteins to methionine. In Streptococcus pyogenes serotype M6 (strain ATCC BAA-946 / MGAS10394), this protein is Peptide methionine sulfoxide reductase MsrA.